An 804-amino-acid polypeptide reads, in one-letter code: Cas scaffolding protein family member 4 (804 aa).

The SH3 domain occupies 11-73 (PKTLLARALY…PANRLQVLRE (63 aa)). Phosphoserine occurs at positions 200 and 297. Disordered stretches follow at residues 369–395 (LERGREAPENSPWISGQTSFLSPDSDR), 607–628 (QRETESYQESSPFDRQPTTEHS), and 642–686 (QQSP…TERK). Polar residues predominate over residues 380 to 390 (PWISGQTSFLS). The segment covering 649 to 664 (EKGKPTMEGKSNRNPD) has biased composition (basic and acidic residues).

The protein belongs to the CAS family. As to quaternary structure, interacts (via SH3 domain) with PTK2/FAK1 (via C-terminus). Post-translationally, phosphorylated on tyrosines by SRC.

The protein resides in the cytoplasm. The protein localises to the cytoskeleton. It is found in the cell junction. It localises to the focal adhesion. Functionally, docking protein that plays a role in tyrosine kinase-based signaling related to cell adhesion and cell spreading. Regulates PTK2/FAK1 activity, focal adhesion integrity, and cell spreading. In Mus musculus (Mouse), this protein is Cas scaffolding protein family member 4.